A 496-amino-acid polypeptide reads, in one-letter code: Matrilin-1 (496 aa).

An N-terminal signal peptide occupies residues 1–22 (MRVLSGTSLMLCSLLLLLQALC). Positions 23 to 222 (SPGLAPQSRG…SRKFQEAFCV (200 aa)) constitute a VWFA 1 domain. An N-linked (GlcNAc...) asparagine glycan is attached at Asn76. One can recognise an EGF-like domain in the interval 223–263 (VSDLCATGDHDCEQVCISSPGSYTCACHEGFTLNSDGKTCN). 3 disulfide bridges follow: Cys227-Cys238, Cys234-Cys247, and Cys249-Cys262. The VWFA 2 domain maps to 264–453 (VCSGGGGSSA…GKKLQKKICV (190 aa)). A glycan (N-linked (GalNAc...) asparagine) is linked at Asn344. The stretch at 467-495 (QAKVEGLLQALTRKLEAVSKRLAILENTV) forms a coiled coil.

Homotrimer. Part of a complex composed of MATN1 (via VWFA1 domain), type 2 collagens and type 6 collagens. Forms a complex (via covalent bonds) with ACAN; the interaction increases in abundance with increasing age of the organism via an increase in occupancy of MATN1 binding sites. Interacts with COMP. N-glycosylated; reduces binding affinity for type 2 collagens.

The protein localises to the secreted. Its subcellular location is the extracellular space. It is found in the extracellular matrix. In terms of biological role, a major component of the extracellular matrix of non-articular cartilage. Binds to type 2 collagens and forms long concatenated protein networks as part of the extracellular matrix. Required for the network-like organization and bundling of collagen fibrils surrounding chondrocytes in the zones of maturation and hypertrophy. Required for mechanotransduction and adaption to mechanical loading in cartilage chondrocytes, resulting in an increase in expression of the extracellular matrix components ACAN and COL2A1. Acts as a moderator of angiogenesis in response to injury. The sequence is that of Matrilin-1 from Homo sapiens (Human).